Reading from the N-terminus, the 346-residue chain is tRNA N6-adenosine threonylcarbamoyltransferase (346 aa).

2 residues coordinate Fe cation: H110 and H114. Residues 132 to 136 (LLSGG), D165, G178, and N274 each bind substrate. Residue D298 coordinates Fe cation.

This sequence belongs to the KAE1 / TsaD family. It depends on Fe(2+) as a cofactor.

Its subcellular location is the cytoplasm. It catalyses the reaction L-threonylcarbamoyladenylate + adenosine(37) in tRNA = N(6)-L-threonylcarbamoyladenosine(37) in tRNA + AMP + H(+). Its function is as follows. Required for the formation of a threonylcarbamoyl group on adenosine at position 37 (t(6)A37) in tRNAs that read codons beginning with adenine. Is involved in the transfer of the threonylcarbamoyl moiety of threonylcarbamoyl-AMP (TC-AMP) to the N6 group of A37, together with TsaE and TsaB. TsaD likely plays a direct catalytic role in this reaction. The protein is tRNA N6-adenosine threonylcarbamoyltransferase of Borreliella burgdorferi (strain ATCC 35210 / DSM 4680 / CIP 102532 / B31) (Borrelia burgdorferi).